We begin with the raw amino-acid sequence, 301 residues long: 4-hydroxy-tetrahydrodipicolinate synthase (301 aa).

Threonine 46 contributes to the pyruvate binding site. Tyrosine 134 acts as the Proton donor/acceptor in catalysis. Lysine 162 (schiff-base intermediate with substrate) is an active-site residue. Position 203 (isoleucine 203) interacts with pyruvate.

Belongs to the DapA family. In terms of assembly, homotetramer; dimer of dimers.

The protein localises to the cytoplasm. It catalyses the reaction L-aspartate 4-semialdehyde + pyruvate = (2S,4S)-4-hydroxy-2,3,4,5-tetrahydrodipicolinate + H2O + H(+). The protein operates within amino-acid biosynthesis; L-lysine biosynthesis via DAP pathway; (S)-tetrahydrodipicolinate from L-aspartate: step 3/4. In terms of biological role, catalyzes the condensation of (S)-aspartate-beta-semialdehyde [(S)-ASA] and pyruvate to 4-hydroxy-tetrahydrodipicolinate (HTPA). The sequence is that of 4-hydroxy-tetrahydrodipicolinate synthase from Anaplasma marginale (strain St. Maries).